The following is a 368-amino-acid chain: 3-dehydroquinate synthase (368 aa).

NAD(+) contacts are provided by residues 112–116 (GVIGD), 136–137 (TT), K149, and K158. Zn(2+) contacts are provided by E191, H256, and H273.

It belongs to the sugar phosphate cyclases superfamily. Dehydroquinate synthase family. The cofactor is Co(2+). It depends on Zn(2+) as a cofactor. NAD(+) is required as a cofactor.

It is found in the cytoplasm. It catalyses the reaction 7-phospho-2-dehydro-3-deoxy-D-arabino-heptonate = 3-dehydroquinate + phosphate. The protein operates within metabolic intermediate biosynthesis; chorismate biosynthesis; chorismate from D-erythrose 4-phosphate and phosphoenolpyruvate: step 2/7. Catalyzes the conversion of 3-deoxy-D-arabino-heptulosonate 7-phosphate (DAHP) to dehydroquinate (DHQ). The sequence is that of 3-dehydroquinate synthase from Prochlorococcus marinus (strain NATL1A).